The primary structure comprises 546 residues: Membrane protein insertase YidC (546 aa).

The chain crosses the membrane as a helical span at residues 6–26 (LILFIVFSFSLLLLWEAWQDK). The tract at residues 31-56 (PATRPVAGAPAGSAAPTPSTALNAPA) is disordered. Positions 37–56 (AGAPAGSAAPTPSTALNAPA) are enriched in low complexity. Helical transmembrane passes span 351–371 (LVGN…LALY), 425–445 (LPIL…LAAV), 465–482 (WYIL…QVKL), and 494–514 (IMMI…AGLV).

It belongs to the OXA1/ALB3/YidC family. Type 1 subfamily. In terms of assembly, interacts with the Sec translocase complex via SecD. Specifically interacts with transmembrane segments of nascent integral membrane proteins during membrane integration.

It is found in the cell inner membrane. Its function is as follows. Required for the insertion and/or proper folding and/or complex formation of integral membrane proteins into the membrane. Involved in integration of membrane proteins that insert both dependently and independently of the Sec translocase complex, as well as at least some lipoproteins. Aids folding of multispanning membrane proteins. This is Membrane protein insertase YidC from Thiobacillus denitrificans (strain ATCC 25259 / T1).